Here is a 209-residue protein sequence, read N- to C-terminus: Glutathione S-transferase F7 (209 aa).

Residues 2–83 (AGIKVFGHPA…YIAHFYSDKG (82 aa)) enclose the GST N-terminal domain. Residues 12-13 (ST), 41-42 (HK), 54-55 (KV), and 67-68 (ES) contribute to the glutathione site. In terms of domain architecture, GST C-terminal spans 90 to 209 (GSKDIAGIAM…TSRPSAKKVL (120 aa)).

Belongs to the GST superfamily. Phi family.

It localises to the cytoplasm. The protein resides in the cytosol. It catalyses the reaction RX + glutathione = an S-substituted glutathione + a halide anion + H(+). Its function is as follows. May be involved in the conjugation of reduced glutathione to a wide number of exogenous and endogenous hydrophobic electrophiles and have a detoxification role against certain herbicides. This is Glutathione S-transferase F7 from Arabidopsis thaliana (Mouse-ear cress).